Reading from the N-terminus, the 389-residue chain is Lipid-A-disaccharide synthase (389 aa).

This sequence belongs to the LpxB family.

It carries out the reaction a lipid X + a UDP-2-N,3-O-bis[(3R)-3-hydroxyacyl]-alpha-D-glucosamine = a lipid A disaccharide + UDP + H(+). It functions in the pathway bacterial outer membrane biogenesis; LPS lipid A biosynthesis. Condensation of UDP-2,3-diacylglucosamine and 2,3-diacylglucosamine-1-phosphate to form lipid A disaccharide, a precursor of lipid A, a phosphorylated glycolipid that anchors the lipopolysaccharide to the outer membrane of the cell. The protein is Lipid-A-disaccharide synthase of Burkholderia vietnamiensis (strain G4 / LMG 22486) (Burkholderia cepacia (strain R1808)).